The sequence spans 266 residues: Tryptophan synthase alpha chain (266 aa).

Catalysis depends on proton acceptor residues glutamate 49 and aspartate 60.

It belongs to the TrpA family. As to quaternary structure, tetramer of two alpha and two beta chains.

It catalyses the reaction (1S,2R)-1-C-(indol-3-yl)glycerol 3-phosphate + L-serine = D-glyceraldehyde 3-phosphate + L-tryptophan + H2O. Its pathway is amino-acid biosynthesis; L-tryptophan biosynthesis; L-tryptophan from chorismate: step 5/5. In terms of biological role, the alpha subunit is responsible for the aldol cleavage of indoleglycerol phosphate to indole and glyceraldehyde 3-phosphate. The protein is Tryptophan synthase alpha chain of Opitutus terrae (strain DSM 11246 / JCM 15787 / PB90-1).